The primary structure comprises 113 residues: Ribonuclease P protein component (113 aa).

Basic residues predominate over residues 1-10 (MLPTRHRMRT). The disordered stretch occupies residues 1 to 23 (MLPTRHRMRTSAHFSTTVRSGAR).

This sequence belongs to the RnpA family. Consists of a catalytic RNA component (M1 or rnpB) and a protein subunit.

It catalyses the reaction Endonucleolytic cleavage of RNA, removing 5'-extranucleotides from tRNA precursor.. In terms of biological role, RNaseP catalyzes the removal of the 5'-leader sequence from pre-tRNA to produce the mature 5'-terminus. It can also cleave other RNA substrates such as 4.5S RNA. The protein component plays an auxiliary but essential role in vivo by binding to the 5'-leader sequence and broadening the substrate specificity of the ribozyme. This chain is Ribonuclease P protein component, found in Kocuria rhizophila (strain ATCC 9341 / DSM 348 / NBRC 103217 / DC2201).